Here is a 782-residue protein sequence, read N- to C-terminus: Hypersensitive to pore-forming toxin protein 40 (782 aa).

The Tudor; degenerate domain occupies 138–203 (ESEIVPGAMY…TLFVSDQFSI (66 aa)). Composition is skewed to polar residues over residues 332 to 346 (SVNP…SSSM) and 413 to 443 (FEST…STIQ). Disordered stretches follow at residues 332 to 351 (SVNP…DCPY), 413 to 448 (FEST…NEED), 472 to 492 (IERP…NMSE), and 617 to 672 (VAQG…LEDP). Residues 617-634 (VAQGSNAPKTAPNDSVNS) show a composition bias toward polar residues. Residues 638–662 (DDIHETDKRGNHCKSVTEDPKDNKD) are compositionally biased toward basic and acidic residues.

The protein localises to the cytoplasm. It is found in the perinuclear region. This Caenorhabditis elegans protein is Hypersensitive to pore-forming toxin protein 40.